A 135-amino-acid chain; its full sequence is MSASPKERCFSFGKDQRLLNSSDFTPVFNDAPIRASNSEILILCKLSTTGKARLGLVVAKKNIKHANKRNQFKRIARESFRLKQHKLPPIDAIVLARRGADSLSKVELRRMFDGLWKRVVKKAEKLTATQPEKTG.

Belongs to the RnpA family. As to quaternary structure, consists of a catalytic RNA component (M1 or rnpB) and a protein subunit.

It carries out the reaction Endonucleolytic cleavage of RNA, removing 5'-extranucleotides from tRNA precursor.. Its function is as follows. RNaseP catalyzes the removal of the 5'-leader sequence from pre-tRNA to produce the mature 5'-terminus. It can also cleave other RNA substrates such as 4.5S RNA. The protein component plays an auxiliary but essential role in vivo by binding to the 5'-leader sequence and broadening the substrate specificity of the ribozyme. This Saccharophagus degradans (strain 2-40 / ATCC 43961 / DSM 17024) protein is Ribonuclease P protein component.